The following is a 425-amino-acid chain: MREPDFLNHFLKKGYFKKHAKAVLALSGGLDSMFLFKVLSTYQKELEIELILAHVNHKQRIESDWEEKELRKLAAEAELPIYISNFSGEFSEARARNFRYDFFQEVMKKTGATALVTAHHADDQVETILMRLIRGTRLRYLSGIKEKQVVGEIEIIRPFLHFQKKDFPSIFHFEDTSNQENHYFRNRIRNSYLPELEKENPRFRDAILGIGNEILDYDLAIAELSNNINVEDLQQLFSYSESTQRVLLQTYLNRFPDLNLTKAQFAEVQQILKSKSQYRHPIKNGYELIKEYQQFQICKISPQADEKEDELVLHYQNQVAYQGYLFSFGLPLEGESIQQIPVSRETSIHIRHRKTGDVLIQNGHRKKLRRLFIDLKIPMEKRNSALIIEQFGEIVSILGIATNNLSKKTKNDIMNTVLYIEKIDR.

27-32 (SGGLDS) lines the ATP pocket.

It belongs to the tRNA(Ile)-lysidine synthase family.

It is found in the cytoplasm. It carries out the reaction cytidine(34) in tRNA(Ile2) + L-lysine + ATP = lysidine(34) in tRNA(Ile2) + AMP + diphosphate + H(+). Its function is as follows. Ligates lysine onto the cytidine present at position 34 of the AUA codon-specific tRNA(Ile) that contains the anticodon CAU, in an ATP-dependent manner. Cytidine is converted to lysidine, thus changing the amino acid specificity of the tRNA from methionine to isoleucine. This chain is tRNA(Ile)-lysidine synthase, found in Streptococcus pneumoniae (strain Taiwan19F-14).